Consider the following 72-residue polypeptide: DNA gyrase inhibitor YacG (72 aa).

Residues Cys17, Cys20, Cys32, and Cys36 each contribute to the Zn(2+) site. A disordered region spans residues 52-72 (PGPEEDEMSYPPHSNDGNRSR).

The protein belongs to the DNA gyrase inhibitor YacG family. In terms of assembly, interacts with GyrB. It depends on Zn(2+) as a cofactor.

Its function is as follows. Inhibits all the catalytic activities of DNA gyrase by preventing its interaction with DNA. Acts by binding directly to the C-terminal domain of GyrB, which probably disrupts DNA binding by the gyrase. In Methylorubrum extorquens (strain CM4 / NCIMB 13688) (Methylobacterium extorquens), this protein is DNA gyrase inhibitor YacG.